The sequence spans 607 residues: Matrix metalloproteinase-16 (607 aa).

The signal sequence occupies residues 1-31 (MILLTFSTGRRLDFVHHSGVFFLQTLLWILC). The propeptide occupies 32–119 (ATVCGTEQYF…SSKFHIRRKR (88 aa)). A glycan (N-linked (GlcNAc...) asparagine) is linked at Asn-83. The Cysteine switch signature appears at 99-106 (PRCGVPDQ). Residue Cys-101 coordinates Zn(2+). Over 120–564 (YALTGQKWQH…LDNTASTVKA (445 aa)) the chain is Extracellular. Asp-183 serves as a coordination point for Ca(2+). Zn(2+)-binding residues include His-193 and Asp-195. Ca(2+) contacts are provided by Asp-200, Gly-201, Gly-203, and Phe-205. His-208 contributes to the Zn(2+) binding site. Ca(2+) is bound by residues Gly-215, Gly-217, and Asp-219. His-221 lines the Zn(2+) pocket. The Ca(2+) site is built by Asp-223 and Glu-226. Residue His-246 participates in Zn(2+) binding. Residue Glu-247 is part of the active site. The Zn(2+) site is built by His-250 and His-256. Positions 281-340 (DDLQGIQKIYGPPDKIPPPTRPLPTVPPHRSIPPADPRKNDRPKPPRPPTGRPSYPGAKP) are disordered. Residues 294–315 (DKIPPPTRPLPTVPPHRSIPPA) show a composition bias toward pro residues. Hemopexin repeat units follow at residues 340–388 (PNIC…WRGL), 389–434 (PPSI…GSGI), 436–484 (PHGI…KGIP), and 485–532 (ESPQ…FMGC). Residues Cys-343 and Cys-532 are joined by a disulfide bond. A helical transmembrane segment spans residues 565 to 585 (IAIVIPCILALCLLVLVYTVF). Residues 586 to 607 (QFKRKGTPRHILYCKRSMQEWV) are Cytoplasmic-facing.

It belongs to the peptidase M10A family. In terms of assembly, interacts with CSPG4 through CSPG4 chondroitin sulfate glycosaminoglycan. Requires Zn(2+) as cofactor. Ca(2+) is required as a cofactor. The precursor is cleaved by a furin endopeptidase. Expressed in heart, brain, placenta, ovary and small intestine. Isoform Short is found in the ovary.

Its subcellular location is the cell membrane. It localises to the secreted. The protein localises to the extracellular space. The protein resides in the extracellular matrix. It is found in the cell surface. With respect to regulation, TIMP-2 shows little inhibitory activity compared to TIMP-1. TIMP-1 seems to have less binding affinity than TIMP-2 for the short isoform. Its function is as follows. Endopeptidase that degrades various components of the extracellular matrix, such as collagen type III and fibronectin. Activates progelatinase A. Involved in the matrix remodeling of blood vessels. Isoform short cleaves fibronectin and also collagen type III, but at lower rate. It has no effect on type I, II, IV and V collagen. However, upon interaction with CSPG4, it may be involved in degradation and invasion of type I collagen by melanoma cells. This is Matrix metalloproteinase-16 from Homo sapiens (Human).